A 207-amino-acid polypeptide reads, in one-letter code: Ribonuclease HII (207 aa).

Residues 18–207 (TYLSGSDEAG…PIKKISKETS (190 aa)) enclose the RNase H type-2 domain. Residues Asp24, Glu25, and Asp116 each coordinate a divalent metal cation.

The protein belongs to the RNase HII family. The cofactor is Mn(2+). Mg(2+) serves as cofactor.

Its subcellular location is the cytoplasm. The catalysed reaction is Endonucleolytic cleavage to 5'-phosphomonoester.. Functionally, endonuclease that specifically degrades the RNA of RNA-DNA hybrids. The sequence is that of Ribonuclease HII from Mycoplasma mycoides subsp. mycoides SC (strain CCUG 32753 / NCTC 10114 / PG1).